The chain runs to 211 residues: MRVRKRKGAEEHLANNPHYVILNPEDAKGRWHDVFGNDRPIHIEVGSGKGGFITGMALKNPDINYIGIDIQLSVLSYALDKVLASEVSNVKLLRVDGSSLTNYFEDGEVDMMYLNFSDPWPKTKHEKRRLTYKDFLDTYKRILPEHGEIHFKTDNRGLFEYSLASFSQYGMTLRQIWLDLHASNYEGNVMTEYEEKFSNKGQVIYRVEANF.

E44, D69, D96, and D118 together coordinate S-adenosyl-L-methionine. D118 is an active-site residue. K122 serves as a coordination point for substrate. The interval 124–129 (KHEKRR) is interaction with RNA. Substrate is bound by residues D154 and 191-194 (TEYE).

Belongs to the class I-like SAM-binding methyltransferase superfamily. TrmB family.

The catalysed reaction is guanosine(46) in tRNA + S-adenosyl-L-methionine = N(7)-methylguanosine(46) in tRNA + S-adenosyl-L-homocysteine. Its pathway is tRNA modification; N(7)-methylguanine-tRNA biosynthesis. Functionally, catalyzes the formation of N(7)-methylguanine at position 46 (m7G46) in tRNA. The protein is tRNA (guanine-N(7)-)-methyltransferase of Streptococcus pyogenes serotype M6 (strain ATCC BAA-946 / MGAS10394).